Here is a 136-residue protein sequence, read N- to C-terminus: Transcription antitermination protein NusB (136 aa).

It belongs to the NusB family.

Functionally, involved in transcription antitermination. Required for transcription of ribosomal RNA (rRNA) genes. Binds specifically to the boxA antiterminator sequence of the ribosomal RNA (rrn) operons. This is Transcription antitermination protein NusB from Treponema denticola (strain ATCC 35405 / DSM 14222 / CIP 103919 / JCM 8153 / KCTC 15104).